We begin with the raw amino-acid sequence, 810 residues long: AMP deaminase (810 aa).

The segment covering 1-10 (MDNQATQRLN) has biased composition (polar residues). Disordered stretches follow at residues 1-61 (MDNQ…SHES) and 114-137 (AAMNKGHDSADHASQNSGGKPRTL). Serine 19, serine 58, and serine 61 each carry phosphoserine. Residues 125 to 137 (HASQNSGGKPRTL) are compositionally biased toward polar residues. A Phosphoserine modification is found at serine 138. Residues histidine 362 and histidine 364 each coordinate Zn(2+). Substrate-binding positions include histidine 364 and 433–438 (KFNLKY). Histidine 630 contributes to the Zn(2+) binding site. Glutamate 633 serves as a coordination point for substrate. Residue histidine 652 is the Proton acceptor of the active site. Aspartate 707 is a binding site for Zn(2+). A substrate-binding site is contributed by 708 to 711 (DPLQ).

The protein belongs to the metallo-dependent hydrolases superfamily. Adenosine and AMP deaminases family. As to quaternary structure, homotetramer. It depends on Zn(2+) as a cofactor.

The catalysed reaction is AMP + H2O + H(+) = IMP + NH4(+). It participates in purine metabolism; IMP biosynthesis via salvage pathway; IMP from AMP: step 1/1. AMP deaminase plays a critical role in energy metabolism. This chain is AMP deaminase (AMD1), found in Saccharomyces cerevisiae (strain ATCC 204508 / S288c) (Baker's yeast).